The chain runs to 38 residues: Toxin BmK NSPK (38 aa).

3 cysteine pairs are disulfide-bonded: Cys7–Cys27, Cys13–Cys32, and Cys17–Cys34.

Expressed by the venom gland.

The protein localises to the secreted. Functionally, blocks voltage-gated potassium (Kv) channel and augments neurite extension via NGF/TrkA signaling pathway. The chain is Toxin BmK NSPK from Olivierus martensii (Manchurian scorpion).